We begin with the raw amino-acid sequence, 232 residues long: MFALGDLNLTYLVSITAVSLYVSTAAVALSAALGLPISLAVGFRDFYGKSVVTSVISTGMGFPSVVVGLVVLLVLSRSGPLGTFELLFTPEAMILSQTILALPVLVSVSLSAVQSVPQDLRDAAFAAGGTSTDIALLVVREARYGIVTALLAAYGRAISEVGSVLIVGGNIVFSDSTSFTRTLTTAITVEARKGNIETGIALGAILLALVLGVNALGARFRDRTPGRNGRGR.

The ABC transmembrane type-1 domain maps to 16-217 (TAVSLYVSTA…ALVLGVNALG (202 aa)). 5 consecutive transmembrane segments (helical) span residues 23–43 (STAAVALSAALGLPISLAVGF), 55–75 (VISTGMGFPSVVVGLVVLLVL), 93–113 (MILSQTILALPVLVSVSLSAV), 146–166 (IVTALLAAYGRAISEVGSVLI), and 198–218 (TGIALGAILLALVLGVNALGA).

Belongs to the binding-protein-dependent transport system permease family. As to quaternary structure, the complex is composed of two ATP-binding proteins (HVO_1886), two transmembrane proteins (HVO_1887) and a solute-binding protein (HVO_1888).

Its subcellular location is the cell membrane. In terms of biological role, part of an ABC transporter complex involved in anions import. Responsible for the translocation of the substrate across the membrane. The protein is Probable anion ABC transporter permease protein HVO_1887 of Haloferax volcanii (strain ATCC 29605 / DSM 3757 / JCM 8879 / NBRC 14742 / NCIMB 2012 / VKM B-1768 / DS2) (Halobacterium volcanii).